The primary structure comprises 525 residues: uncharacterized protein (525 aa).

An N-terminal signal peptide occupies residues 1–21 (MLECLSALLVLFAGGGGSVLA). Residues 22–448 (AVQSKTVADP…ISAASQLDER (427 aa)) are Extracellular-facing. The interval 242-264 (KVSSENCSKDTDDKSGSKKERNT) is disordered. A helical membrane pass occupies residues 449–469 (IFIFTAITVSITTLMMLGFSY). The Cytoplasmic portion of the chain corresponds to 470–525 (RSRVSFRDHSIDDSDDDNDWSDDEVEFDEEYFYSLPVSIPEKGISLDKMAQQLGVE).

It is found in the membrane. This is an uncharacterized protein from Saccharomyces cerevisiae (strain RM11-1a) (Baker's yeast).